The primary structure comprises 857 residues: Envelope glycoprotein gp160 (857 aa).

A signal peptide spans 1–26 (MAHTSNHLFILLLLISVYGFLGHKKN). Over 27–682 (YVTVFYGIPA…FTSWMAYIRL (656 aa)) the chain is Extracellular. A glycan (N-linked (GlcNAc...) asparagine; by host) is linked at N39. C46 and C59 are oxidised to a cystine. N-linked (GlcNAc...) asparagine; by host glycosylation is found at N72, N81, N116, N121, N142, N150, N167, N193, N205, N237, N240, N271, N277, N288, N299, N309, N364, N397, N407, N447, N464, and N469. 5 disulfides stabilise this stretch: C103–C213, C110–C204, C115–C164, C226–C256, and C236–C248. The tract at residues 115–163 (CNNTGTNTTTKPITTPITTTKPSENLLNDTSPCIKNDTCPGIGLENTVD) is V1. Residues 164–204 (CYFNMTGLRRDEKKQYKDTWYEKDLECNGNSTSTICYMRTC) form a V2 region. The tract at residues 304–336 (CRRPGNKTVIPITIMSGLNFHSQPLNTRPRQAW) is V3. A disulfide bridge links C304 with C337. 2 cysteine pairs are disulfide-bonded: C389–C446 and C396–C419. A V4 region spans residues 396–419 (CNMTWFLNWVENRTGTTQKNYVTC). A V5 region spans residues 464–472 (NDTKTNITM). The tract at residues 515 to 535 (GVMVLGFLGLLAMAGSAMGAT) is fusion peptide. An immunosuppression region spans residues 578–594 (LQTRVTAIEKYLKDQAL). Residues N614, N623, and N639 are each glycosylated (N-linked (GlcNAc...) asparagine; by host). The stretch at 627 to 648 (QQWEKRVNFLDANITALLEEAQ) forms a coiled coil. Residues 660–681 (KLNSWDVFGNWFDFTSWMAYIR) form an MPER; binding to GalCer region. Residues 683–703 (GLYVVAGLIVLRIVIYIMQML) traverse the membrane as a helical segment. The Cytoplasmic segment spans residues 704 to 857 (ARLRKGYRPV…IRQGLELALL (154 aa)). The YXXV motif; contains endocytosis signal signature appears at 710-713 (YRPV). C776 is lipidated: S-palmitoyl cysteine; by host. The Di-leucine internalization motif motif lies at 856–857 (LL).

As to quaternary structure, the mature envelope protein (Env) consists of a homotrimer of non-covalently associated gp120-gp41 heterodimers. The resulting complex protrudes from the virus surface as a spike. There seems to be as few as 10 spikes on the average virion. Interacts with human CD4, CCR5 and CXCR4, to form a P4HB/PDI-CD4-CXCR4-gp120 complex. Gp120 also interacts with the C-type lectins CD209/DC-SIGN and CLEC4M/DC-SIGNR (collectively referred to as DC-SIGN(R)). Gp120 and gp41 interact with GalCer. In terms of assembly, the mature envelope protein (Env) consists of a homotrimer of non-covalently associated gp120-gp41 heterodimers. The resulting complex protrudes from the virus surface as a spike. There seems to be as few as 10 spikes on the average virion. Post-translationally, specific enzymatic cleavages in vivo yield mature proteins. Envelope glycoproteins are synthesized as an inactive precursor that is heavily N-glycosylated and processed likely by host cell furin in the Golgi to yield the mature SU and TM proteins. The cleavage site between SU and TM requires the minimal sequence [KR]-X-[KR]-R. Palmitoylation of the transmembrane protein and of Env polyprotein (prior to its proteolytic cleavage) is essential for their association with host cell membrane lipid rafts. Palmitoylation is therefore required for envelope trafficking to classical lipid rafts, but not for viral replication.

The protein resides in the virion membrane. It is found in the host cell membrane. The protein localises to the host endosome membrane. Functionally, the surface protein gp120 (SU) attaches the virus to the host lymphoid cell by binding to the primary receptor CD4. This interaction induces a structural rearrangement creating a high affinity binding site for a chemokine coreceptor like CXCR4 and/or CCR5. This peculiar 2 stage receptor-interaction strategy allows gp120 to maintain the highly conserved coreceptor-binding site in a cryptic conformation, protected from neutralizing antibodies. Since CD4 also displays a binding site for the disulfide-isomerase P4HB/PDI, a P4HB/PDI-CD4-CXCR4-gp120 complex may form. In that complex, P4HB/PDI could reach and reduce gp120 disulfide bonds, causing major conformational changes in gp120. TXN, another PDI family member could also be involved in disulfide rearrangements in Env during fusion. These changes are transmitted to the transmembrane protein gp41 and are thought to activate its fusogenic potential by unmasking its fusion peptide. The surface protein gp120 is a ligand for CD209/DC-SIGN and CLEC4M/DC-SIGNR, which are respectively found on dendritic cells (DCs), and on endothelial cells of liver sinusoids and lymph node sinuses. These interactions allow capture of viral particles at mucosal surfaces by these cells and subsequent transmission to permissive cells. DCs are professional antigen presenting cells, critical for host immunity by inducing specific immune responses against a broad variety of pathogens. They act as sentinels in various tissues where they take up antigen, process it, and present it to T-cells following migration to lymphoid organs. HIV subverts the migration properties of dendritic cells to gain access to CD4+ T-cells in lymph nodes. Virus transmission to permissive T-cells occurs either in trans (without DCs infection, through viral capture and transmission), or in cis (following DCs productive infection, through the usual CD4-gp120 interaction), thereby inducing a robust infection. In trans infection, bound virions remain infectious over days and it is proposed that they are not degraded, but protected in non-lysosomal acidic organelles within the DCs close to the cell membrane thus contributing to the viral infectious potential during DCs' migration from the periphery to the lymphoid tissues. On arrival at lymphoid tissues, intact virions recycle back to DCs' cell surface allowing virus transmission to CD4+ T-cells. Virion capture also seems to lead to MHC-II-restricted viral antigen presentation, and probably to the activation of HIV-specific CD4+ cells. Its function is as follows. The transmembrane protein gp41 (TM) acts as a class I viral fusion protein. Under the current model, the protein has at least 3 conformational states: pre-fusion native state, pre-hairpin intermediate state, and post-fusion hairpin state. During fusion of viral and target intracellular membranes, the coiled coil regions (heptad repeats) assume a trimer-of-hairpins structure, positioning the fusion peptide in close proximity to the C-terminal region of the ectodomain. The formation of this structure appears to drive apposition and subsequent fusion of viral and target cell membranes. Complete fusion occurs in host cell endosomes and is dynamin-dependent, however some lipid transfer might occur at the plasma membrane. The virus undergoes clathrin-dependent internalization long before endosomal fusion, thus minimizing the surface exposure of conserved viral epitopes during fusion and reducing the efficacy of inhibitors targeting these epitopes. Membranes fusion leads to delivery of the nucleocapsid into the cytoplasm. In terms of biological role, the envelope glycoprotein gp160 precursor down-modulates cell surface CD4 antigen by interacting with it in the endoplasmic reticulum and blocking its transport to the cell surface. Functionally, the gp120-gp41 heterodimer seems to contribute to T-cell depletion during HIV-1 infection. The envelope glycoproteins expressed on the surface of infected cells induce apoptosis through an interaction with uninfected cells expressing the receptor (CD4) and the coreceptors CXCR4 or CCR5. This type of bystander killing may be obtained by at least three distinct mechanisms. First, the interaction between the 2 cells can induce cellular fusion followed by nuclear fusion within the syncytium. Syncytia are condemned to die from apoptosis. Second, the 2 interacting cells may not fuse entirely and simply exchange plasma membrane lipids, after a sort of hemifusion process, followed by rapid death. Third, it is possible that virus-infected cells, on the point of undergoing apoptosis, fuse with CD4-expressing cells, in which case apoptosis is rapidly transmitted from one cell to the other and thus occurs in a sort of contagious fashion. The gp120-gp41 heterodimer allows rapid transcytosis of the virus through CD4 negative cells such as simple epithelial monolayers of the intestinal, rectal and endocervical epithelial barriers. Both gp120 and gp41 specifically recognize glycosphingolipids galactosyl-ceramide (GalCer) or 3' sulfo-galactosyl-ceramide (GalS) present in the lipid rafts structures of epithelial cells. Binding to these alternative receptors allows the rapid transcytosis of the virus through the epithelial cells. This transcytotic vesicle-mediated transport of virions from the apical side to the basolateral side of the epithelial cells does not involve infection of the cells themselves. In Homo sapiens (Human), this protein is Envelope glycoprotein gp160 (env).